The following is a 574-amino-acid chain: Septation ring formation regulator EzrA (574 aa).

Residues 1–7 (MSSGLIL) are Extracellular-facing. The helical transmembrane segment at 8–26 (LIVAIVLLVIIAYLVGVII) threads the bilayer. The Cytoplasmic segment spans residues 27–574 (RKRNDTLITS…YEKTRERIRF (548 aa)). Coiled coils occupy residues 102-131 (NFIRAKHEINSVESQLNLVEEDITAIREAL), 161-190 (ENEDNFGSTMAEIEKQMKNIEAEFSQFVAL), 276-379 (VTLD…QQEK), and 459-493 (QLEALMDELSRGRINIEAVSRLSEVATAAIANLEE).

The protein belongs to the EzrA family.

It localises to the cell membrane. In terms of biological role, negative regulator of FtsZ ring formation; modulates the frequency and position of FtsZ ring formation. Inhibits FtsZ ring formation at polar sites. Interacts either with FtsZ or with one of its binding partners to promote depolymerization. The sequence is that of Septation ring formation regulator EzrA from Streptococcus equi subsp. zooepidemicus (strain MGCS10565).